Consider the following 270-residue polypeptide: 3-phenylpropionate-dihydrodiol/cinnamic acid-dihydrodiol dehydrogenase (270 aa).

10-34 is a binding site for NAD(+); the sequence is FITGGGSGLGLALVERFIEEGAQVA. Position 143 (Ser143) interacts with substrate. Tyr156 (proton acceptor) is an active-site residue.

It belongs to the short-chain dehydrogenases/reductases (SDR) family.

It carries out the reaction 3-(cis-5,6-dihydroxycyclohexa-1,3-dien-1-yl)propanoate + NAD(+) = 3-(2,3-dihydroxyphenyl)propanoate + NADH + H(+). The catalysed reaction is (2E)-3-(cis-5,6-dihydroxycyclohexa-1,3-dien-1-yl)prop-2-enoate + NAD(+) = (2E)-3-(2,3-dihydroxyphenyl)prop-2-enoate + NADH + H(+). Its pathway is aromatic compound metabolism; 3-phenylpropanoate degradation. Functionally, converts 3-phenylpropionate-dihydrodiol (PP-dihydrodiol) and cinnamic acid-dihydrodiol (CI-dihydrodiol) into 3-(2,3-dihydroxylphenyl)propanoic acid (DHPP) and 2,3-dihydroxicinnamic acid (DHCI), respectively. The sequence is that of 3-phenylpropionate-dihydrodiol/cinnamic acid-dihydrodiol dehydrogenase from Escherichia coli O157:H7.